Reading from the N-terminus, the 307-residue chain is Ribosomal RNA small subunit methyltransferase H (307 aa).

Residues 32–34 (GGH), aspartate 52, phenylalanine 78, aspartate 99, and glutamine 106 contribute to the S-adenosyl-L-methionine site.

It belongs to the methyltransferase superfamily. RsmH family.

The protein localises to the cytoplasm. It catalyses the reaction cytidine(1402) in 16S rRNA + S-adenosyl-L-methionine = N(4)-methylcytidine(1402) in 16S rRNA + S-adenosyl-L-homocysteine + H(+). Functionally, specifically methylates the N4 position of cytidine in position 1402 (C1402) of 16S rRNA. The sequence is that of Ribosomal RNA small subunit methyltransferase H from Caldicellulosiruptor saccharolyticus (strain ATCC 43494 / DSM 8903 / Tp8T 6331).